The primary structure comprises 311 residues: Heme A synthase (311 aa).

At 1-6 (MQRFIK) the chain is on the cytoplasmic side. Residues 7 to 27 (WLAVITSLDLLVVLLGGALVT) form a helical membrane-spanning segment. Residues 28 to 62 (KTGSGQGCGKSWPLCNGEFVPSNLSMETIIELSHR) are Extracellular-facing. Cys-35 and Cys-42 are joined by a disulfide. Glu-58 is a catalytic residue. His-61 is a heme o binding site. The chain crosses the membrane as a helical span at residues 63-83 (LTSGSAGILVTLLCILSWKYY). Residues 84–91 (KHVRETKT) are Cytoplasmic-facing. The chain crosses the membrane as a helical span at residues 92–112 (LAILSFVFLVAQALMGAAAVV). Over 113–121 (WGQMPAVLA) the chain is Extracellular. The chain crosses the membrane as a helical span at residues 122–142 (IHFGISLISFASVILLTCLIF). His-123 is a binding site for heme o. The Cytoplasmic portion of the chain corresponds to 143-159 (EIDQKFDARSLIMDKKM). A helical transmembrane segment spans residues 160-180 (KFHIYGVTIYSYIVVYTGALV). Residues 181 to 211 (RHERATLACPDFPLCSKSRPMPTQLHEWVQM) are Extracellular-facing. A disulfide bridge connects residues Cys-189 and Cys-195. The chain crosses the membrane as a helical span at residues 212-232 (GHRVAAMLIFAWILYAMIIAI). His-213 contacts heme b. Residues 233–243 (RHYKQQRVVYW) are Cytoplasmic-facing. The chain crosses the membrane as a helical span at residues 244 to 264 (GWIISFILVTLQAIVGILVVF). The Extracellular segment spans residues 265–271 (TNASLAM). A helical membrane pass occupies residues 272–292 (ALLHSLFISCLFAVLCYLVMI). Position 275 (His-275) interacts with heme b. Over 293–311 (GTRSTVNAKETESTSKQTK) the chain is Cytoplasmic.

It belongs to the COX15/CtaA family. Type 1 subfamily. As to quaternary structure, interacts with CtaB. Heme b is required as a cofactor.

The protein resides in the cell membrane. It catalyses the reaction Fe(II)-heme o + 2 A + H2O = Fe(II)-heme a + 2 AH2. The protein operates within porphyrin-containing compound metabolism; heme A biosynthesis; heme A from heme O: step 1/1. Catalyzes the conversion of heme O to heme A by two successive hydroxylations of the methyl group at C8. The first hydroxylation forms heme I, the second hydroxylation results in an unstable dihydroxymethyl group, which spontaneously dehydrates, resulting in the formyl group of heme A. In Bacillus mycoides (strain KBAB4) (Bacillus weihenstephanensis), this protein is Heme A synthase.